Here is a 483-residue protein sequence, read N- to C-terminus: Glycogen synthase (483 aa).

ADP-alpha-D-glucose is bound at residue lysine 15.

This sequence belongs to the glycosyltransferase 1 family. Bacterial/plant glycogen synthase subfamily.

The catalysed reaction is [(1-&gt;4)-alpha-D-glucosyl](n) + ADP-alpha-D-glucose = [(1-&gt;4)-alpha-D-glucosyl](n+1) + ADP + H(+). The protein operates within glycan biosynthesis; glycogen biosynthesis. In terms of biological role, synthesizes alpha-1,4-glucan chains using ADP-glucose. In Thioalkalivibrio sulfidiphilus (strain HL-EbGR7), this protein is Glycogen synthase.